Here is a 467-residue protein sequence, read N- to C-terminus: Methylenetetrahydrofolate--tRNA-(uracil-5-)-methyltransferase TrmFO (467 aa).

11-16 contacts FAD; that stretch reads GAGLAG.

This sequence belongs to the MnmG family. TrmFO subfamily. Requires FAD as cofactor.

It localises to the cytoplasm. It catalyses the reaction uridine(54) in tRNA + (6R)-5,10-methylene-5,6,7,8-tetrahydrofolate + NADH + H(+) = 5-methyluridine(54) in tRNA + (6S)-5,6,7,8-tetrahydrofolate + NAD(+). The catalysed reaction is uridine(54) in tRNA + (6R)-5,10-methylene-5,6,7,8-tetrahydrofolate + NADPH + H(+) = 5-methyluridine(54) in tRNA + (6S)-5,6,7,8-tetrahydrofolate + NADP(+). Functionally, catalyzes the folate-dependent formation of 5-methyl-uridine at position 54 (M-5-U54) in all tRNAs. The protein is Methylenetetrahydrofolate--tRNA-(uracil-5-)-methyltransferase TrmFO of Prochlorococcus marinus (strain NATL1A).